We begin with the raw amino-acid sequence, 246 residues long: Osmotin-like protein OSML13 (246 aa).

Residues 1–21 (MAYLRSSFVFFLLAFVTYTYA) form the signal peptide. Intrachain disulfides connect Cys30-Cys225, Cys72-Cys82, Cys87-Cys93, Cys141-Cys213, Cys146-Cys196, Cys154-Cys164, Cys168-Cys177, and Cys178-Cys183.

It belongs to the thaumatin family.

This Solanum commersonii (Commerson's wild potato) protein is Osmotin-like protein OSML13.